The primary structure comprises 223 residues: UPF0502 protein Shew185_1758 (223 aa).

It belongs to the UPF0502 family.

This chain is UPF0502 protein Shew185_1758, found in Shewanella baltica (strain OS185).